Reading from the N-terminus, the 814-residue chain is MANEAHNIEHTDPEFRDDSADARTLPLLPVRDTVLFPHAVLPLTVGRESSVQLINSLGEDKTIVVVAQREARVDSPQPSDLFAIGSLAVVHKVVKMPNQSLFVFAEGLERVRVTEYVQLNPYMRATVETVPEAFPPKSAEIEALQRNVLTLFQQIVTGSPTLSDELSTVAMNIEEPGRLVDFVASSLPSLSTKDKQEILETADVQIRLDKINQHLAKELEVQQLRNKIQSEVQDRVQQTQREYYLREQLKAIQKELGEQDDSTRDADELREKVEAAGMPDDVKKEALKELGRLARMSPMAADYSVTRNYIEWLAVLPWQKSSGAGEIDIPKAKDILDEDHYDLQKVKDRILDYLSVRRLKPNMKGPILCFSGPPGVGKTSLGKSIARALGRKFVRISLGGVHDEAEIRGHRRTYIGALPGQIMQGIRRAETNDPVFMLDEIDKVGRDFRGDPSAALLEALDPEQNNSFRDNYLDVPFDLSKVLFITTANQLDPIPEPLRDRMEIIDLQGYSEEEKVHIAFRYLIPRQEEENGITKDMIEFSEEAVRRIIRHYTREAGVRNLERNIGTVCRKLARRIAEGKTEKLAVTPQTITEMLGGEKVRVDTEIAERTKRAGVVVGLAWTPAGGDILFVEATTMKGKGGFTMTGQLGDVMRESMQAALSWVKSNAGKLGIDEEFFEKHDIHIHVPAGAIPKDGPSAGVTMVTALVSLLTDKPLRPLTAMTGEITLSGNVLPIGGVKEKTLAAKRAGVKTIILPSENKMNMDEDLTPEQLQGIEVHYVKTIDEVLEIALPSNKAEEKQDARTRAEVLNEVPAV.

The interval 1–20 (MANEAHNIEHTDPEFRDDSA) is disordered. The 195-residue stretch at 25-219 (LPLLPVRDTV…KINQHLAKEL (195 aa)) folds into the Lon N-terminal domain. 372–379 (GPPGVGKT) is a binding site for ATP. The 183-residue stretch at 610 to 792 (TKRAGVVVGL…DEVLEIALPS (183 aa)) folds into the Lon proteolytic domain. Active-site residues include Ser697 and Lys740.

It belongs to the peptidase S16 family. As to quaternary structure, homohexamer. Organized in a ring with a central cavity.

It localises to the cytoplasm. It carries out the reaction Hydrolysis of proteins in presence of ATP.. Functionally, ATP-dependent serine protease that mediates the selective degradation of mutant and abnormal proteins as well as certain short-lived regulatory proteins. Required for cellular homeostasis and for survival from DNA damage and developmental changes induced by stress. Degrades polypeptides processively to yield small peptide fragments that are 5 to 10 amino acids long. Binds to DNA in a double-stranded, site-specific manner. This is Lon protease from Koribacter versatilis (strain Ellin345).